The chain runs to 144 residues: Ferredoxin-thioredoxin reductase catalytic chain, chloroplastic (144 aa).

A chloroplast-targeting transit peptide spans 1-31 (MTTQASTFAVAVPSVATPFRRHRNPFVVRAQ). A [4Fe-4S] cluster-binding site is contributed by cysteine 83. The active-site Nucleophile is the cysteine 85. A disulfide bond links cysteine 85 and cysteine 115. [4Fe-4S] cluster is bound by residues cysteine 102, cysteine 104, and cysteine 113.

The protein belongs to the ferredoxin thioredoxin reductase beta subunit family. As to quaternary structure, heterodimer of subunit A (variable subunit) and subunit B (catalytic subunit). Heterodimeric FTR forms a complex with ferredoxin and thioredoxin. [4Fe-4S] cluster is required as a cofactor.

The protein resides in the plastid. It localises to the chloroplast. The catalysed reaction is [thioredoxin]-disulfide + 2 reduced [2Fe-2S]-[ferredoxin] + 2 H(+) = [thioredoxin]-dithiol + 2 oxidized [2Fe-2S]-[ferredoxin]. Its function is as follows. Catalytic subunit of the ferredoxin-thioredoxin reductase (FTR), which catalyzes the two-electron reduction of thioredoxins by the electrons provided by reduced ferredoxin. The sequence is that of Ferredoxin-thioredoxin reductase catalytic chain, chloroplastic (FTRC) from Glycine max (Soybean).